Consider the following 435-residue polypeptide: Gap junction alpha-3 protein (435 aa).

The stretch at 2–15 (GDWSFLGRLLENAQ) is an intramembrane region. Residues 16–19 (EHST) are Cytoplasmic-facing. Residues 20–40 (VIGKVWLTVLFIFRILVLGAA) traverse the membrane as a helical segment. Topologically, residues 41-71 (AEDVWGDEQSDFTCNTQQPGCENVCYDRAFP) are extracellular. 3 disulfides stabilise this stretch: Cys-54-Cys-192, Cys-61-Cys-186, and Cys-65-Cys-181. The helical transmembrane segment at 72-92 (ISHIRFWALQIIFVSTPTLIY) threads the bilayer. Residues 93–152 (LGHVLHIVRMEEKKKEREEEEQLKRESPSPKEPPQDNPSSRDDRGRVRMAGALLRTYVFN) are Cytoplasmic-facing. The span at 108–121 (EREEEEQLKRESPS) shows a compositional bias: basic and acidic residues. A disordered region spans residues 108–136 (EREEEEQLKRESPSPKEPPQDNPSSRDDR). The helical transmembrane segment at 153–173 (IIFKTLFEVGFIAGQYFLYGF) threads the bilayer. Residues 174-201 (ELKPLYRCDRWPCPNTVDCFISRPTEKT) are Extracellular-facing. The chain crosses the membrane as a helical span at residues 202-222 (IFIIFMLAVACASLLLNMLEI). Topologically, residues 223–435 (YHLGWKKLKQ…GRARPEDLAI (213 aa)) are cytoplasmic. Residues 332–435 (AAERQPPALK…GRARPEDLAI (104 aa)) are disordered. Composition is skewed to low complexity over residues 342 to 389 (AYPA…ALAG) and 415 to 427 (GRASKASRASSGR).

Belongs to the connexin family. Alpha-type (group II) subfamily. A hemichannel or connexon is composed of a hexamer of connexins. A functional gap junction is formed by the apposition of two hemichannels. Forms heteromeric channels with GJA8.

It localises to the cell membrane. The protein resides in the cell junction. It is found in the gap junction. In terms of biological role, structural component of lens fiber gap junctions. Gap junctions are dodecameric channels that connect the cytoplasm of adjoining cells. They are formed by the docking of two hexameric hemichannels, one from each cell membrane. Small molecules and ions diffuse from one cell to a neighboring cell via the central pore. The protein is Gap junction alpha-3 protein (GJA3) of Homo sapiens (Human).